The chain runs to 203 residues: Pectinesterase inhibitor 12 (203 aa).

Positions 1–26 (MRMSKALAAVVAISVSLSAAAMGVDA) are cleaved as a signal peptide. Cystine bridges form between Cys-32–Cys-47 and Cys-100–Cys-140.

Belongs to the PMEI family.

The protein resides in the secreted. Its subcellular location is the extracellular space. It is found in the apoplast. Pectin methylesterase (PME) inhibitor that inhibits PME in vitro. The protein is Pectinesterase inhibitor 12 of Oryza sativa subsp. japonica (Rice).